The sequence spans 196 residues: Imidazoleglycerol-phosphate dehydratase (196 aa).

It belongs to the imidazoleglycerol-phosphate dehydratase family.

The protein localises to the cytoplasm. The enzyme catalyses D-erythro-1-(imidazol-4-yl)glycerol 3-phosphate = 3-(imidazol-4-yl)-2-oxopropyl phosphate + H2O. It functions in the pathway amino-acid biosynthesis; L-histidine biosynthesis; L-histidine from 5-phospho-alpha-D-ribose 1-diphosphate: step 6/9. This is Imidazoleglycerol-phosphate dehydratase from Oleidesulfovibrio alaskensis (strain ATCC BAA-1058 / DSM 17464 / G20) (Desulfovibrio alaskensis).